A 571-amino-acid polypeptide reads, in one-letter code: Phosphoenolpyruvate-protein phosphotransferase (571 aa).

Catalysis depends on His-189, which acts as the Tele-phosphohistidine intermediate. The phosphoenolpyruvate site is built by Arg-296 and Arg-332. Positions 431 and 455 each coordinate Mg(2+). Phosphoenolpyruvate-binding positions include Asn-454–Asp-455 and Arg-465. Cys-502 functions as the Proton donor in the catalytic mechanism.

This sequence belongs to the PEP-utilizing enzyme family. As to quaternary structure, homodimer. Requires Mg(2+) as cofactor.

It is found in the cytoplasm. It catalyses the reaction L-histidyl-[protein] + phosphoenolpyruvate = N(pros)-phospho-L-histidyl-[protein] + pyruvate. General (non sugar-specific) component of the phosphoenolpyruvate-dependent sugar phosphotransferase system (sugar PTS). This major carbohydrate active-transport system catalyzes the phosphorylation of incoming sugar substrates concomitantly with their translocation across the cell membrane. Enzyme I transfers the phosphoryl group from phosphoenolpyruvate (PEP) to the phosphoryl carrier protein (HPr). In Buchnera aphidicola subsp. Acyrthosiphon pisum (strain APS) (Acyrthosiphon pisum symbiotic bacterium), this protein is Phosphoenolpyruvate-protein phosphotransferase (ptsI).